The following is a 149-amino-acid chain: Calmodulin (149 aa).

Residue Ala2 is modified to N-acetylalanine. 4 consecutive EF-hand domains span residues 8–43 (EQIA…LGQN), 44–79 (PTEA…KMKD), 81–116 (DSEE…LGEK), and 117–149 (LTDE…MTAK). The Ca(2+) site is built by Asp21, Asp23, Asp25, Thr27, Glu32, Asp59, Asn61, Thr63, Glu68, Asp94, Asp96, Asn98, Tyr100, and Glu105. Position 116 is an N6,N6,N6-trimethyllysine (Lys116). Asp130, Asp132, Asp134, Gln136, and Glu141 together coordinate Ca(2+).

This sequence belongs to the calmodulin family.

Its function is as follows. Calmodulin acts as part of a calcium signal transduction pathway by mediating the control of a large number of enzymes, ion channels, aquaporins and other proteins through calcium-binding. Calcium-binding is required for the activation of calmodulin. Among the enzymes to be stimulated by the calmodulin-calcium complex are a number of protein kinases, such as myosin light-chain kinases and calmodulin-dependent protein kinase type II (CaMK2), and phosphatases. The sequence is that of Calmodulin from Myxine glutinosa (Atlantic hagfish).